A 179-amino-acid chain; its full sequence is Peptide methionine sulfoxide reductase MsrA (179 aa).

C14 is a catalytic residue.

It belongs to the MsrA Met sulfoxide reductase family.

It catalyses the reaction L-methionyl-[protein] + [thioredoxin]-disulfide + H2O = L-methionyl-(S)-S-oxide-[protein] + [thioredoxin]-dithiol. The enzyme catalyses [thioredoxin]-disulfide + L-methionine + H2O = L-methionine (S)-S-oxide + [thioredoxin]-dithiol. In terms of biological role, has an important function as a repair enzyme for proteins that have been inactivated by oxidation. Catalyzes the reversible oxidation-reduction of methionine sulfoxide in proteins to methionine. This is Peptide methionine sulfoxide reductase MsrA from Nitrobacter winogradskyi (strain ATCC 25391 / DSM 10237 / CIP 104748 / NCIMB 11846 / Nb-255).